The following is a 249-amino-acid chain: Nodulation protein H (249 aa).

Its function is as follows. Required for the formation of sulfated nod factor. Proposed to transfer activated sulfate (PAPS) to a N-acetylglucosamine of the nod factor. The chain is Nodulation protein H (nodH) from Rhizobium tropici.